We begin with the raw amino-acid sequence, 353 residues long: Histidinol-phosphate aminotransferase (353 aa).

N6-(pyridoxal phosphate)lysine is present on K211.

It belongs to the class-II pyridoxal-phosphate-dependent aminotransferase family. Histidinol-phosphate aminotransferase subfamily. In terms of assembly, homodimer. Requires pyridoxal 5'-phosphate as cofactor.

It carries out the reaction L-histidinol phosphate + 2-oxoglutarate = 3-(imidazol-4-yl)-2-oxopropyl phosphate + L-glutamate. It participates in amino-acid biosynthesis; L-histidine biosynthesis; L-histidine from 5-phospho-alpha-D-ribose 1-diphosphate: step 7/9. This chain is Histidinol-phosphate aminotransferase, found in Marinomonas sp. (strain MWYL1).